The following is a 420-amino-acid chain: Dual-specificity RNA methyltransferase RlmN (420 aa).

The Proton acceptor role is filled by Glu115. Residues 121 to 388 form the Radical SAM core domain; the sequence is DADRGTLCVS…APIRTPRGRD (268 aa). The cysteines at positions 128 and 393 are disulfide-linked. Cys135, Cys139, and Cys142 together coordinate [4Fe-4S] cluster. S-adenosyl-L-methionine contacts are provided by residues 217 to 218, Ser249, 271 to 273, and Asn350; these read GE and SLH. Cys393 serves as the catalytic S-methylcysteine intermediate.

This sequence belongs to the radical SAM superfamily. RlmN family. [4Fe-4S] cluster is required as a cofactor.

It localises to the cytoplasm. The catalysed reaction is adenosine(2503) in 23S rRNA + 2 reduced [2Fe-2S]-[ferredoxin] + 2 S-adenosyl-L-methionine = 2-methyladenosine(2503) in 23S rRNA + 5'-deoxyadenosine + L-methionine + 2 oxidized [2Fe-2S]-[ferredoxin] + S-adenosyl-L-homocysteine. The enzyme catalyses adenosine(37) in tRNA + 2 reduced [2Fe-2S]-[ferredoxin] + 2 S-adenosyl-L-methionine = 2-methyladenosine(37) in tRNA + 5'-deoxyadenosine + L-methionine + 2 oxidized [2Fe-2S]-[ferredoxin] + S-adenosyl-L-homocysteine. Functionally, specifically methylates position 2 of adenine 2503 in 23S rRNA and position 2 of adenine 37 in tRNAs. m2A2503 modification seems to play a crucial role in the proofreading step occurring at the peptidyl transferase center and thus would serve to optimize ribosomal fidelity. The polypeptide is Dual-specificity RNA methyltransferase RlmN (Sphingopyxis alaskensis (strain DSM 13593 / LMG 18877 / RB2256) (Sphingomonas alaskensis)).